Consider the following 489-residue polypeptide: Serine/threonine-protein kinase dyf-5 (489 aa).

The Protein kinase domain occupies 11 to 291; it reads YLMTKRLGDG…ANQSLRYKYF (281 aa). ATP-binding positions include 17 to 25 and Lys-40; that span reads LGDGTFGEV. The active-site Proton acceptor is Asp-132. 2 disordered regions span residues 366-385 and 452-489; these read EKSDNKPLGPTKSNEAKPTA and QTGPTVSNQTNNHSANNSHSPNKMSNTGRVDWAAKYVK. Positions 458-473 are enriched in low complexity; sequence SNQTNNHSANNSHSPN.

This sequence belongs to the protein kinase superfamily. CMGC Ser/Thr protein kinase family. RCK subfamily. The cofactor is Mg(2+). In terms of tissue distribution, expressed in head neurons including amphid and labial sensory neurons and 3 pairs of neurons in the tail including phasmid sensory neurons. In male, expressed in the tail including the sensory rays and the spicule.

Its subcellular location is the perikaryon. The protein localises to the cell projection. It localises to the dendrite. It is found in the axon. The protein resides in the cilium. It catalyses the reaction L-seryl-[protein] + ATP = O-phospho-L-seryl-[protein] + ADP + H(+). The catalysed reaction is L-threonyl-[protein] + ATP = O-phospho-L-threonyl-[protein] + ADP + H(+). Its function is as follows. Serine/threonine-protein kinase which is required for ciliogenesis. Regulates the length and the morphology of sensory neuron cilia. In addition, plays a role in the anterograde intraflagellar transport (IFT) in the cilia by regulating the undocking of kinesin-II motor complex (composed of klp-11, klp-20 and kap-1) before reaching the distal segment and the docking of kinesin motor osm-3 onto IFT cargos. In Caenorhabditis elegans, this protein is Serine/threonine-protein kinase dyf-5.